A 301-amino-acid polypeptide reads, in one-letter code: Beta carbonic anhydrase 5, chloroplastic (301 aa).

A chloroplast-targeting transit peptide spans 1–56 (MAATPTHFSVSHDPFSSTSLLNLQTQAIFGPNHSLKTTQLRIPASFRRKATNLQVM). Position 65 is a phosphothreonine (threonine 65). Serine 128 carries the phosphoserine modification. Cysteine 231 is subject to S-nitrosocysteine.

It belongs to the beta-class carbonic anhydrase family. As to expression, strongly expressed in aerial tissues including leaves, stems, flowers and siliques.

It localises to the plastid. The protein localises to the chloroplast. It carries out the reaction hydrogencarbonate + H(+) = CO2 + H2O. Its function is as follows. Reversible hydration of carbon dioxide. The protein is Beta carbonic anhydrase 5, chloroplastic (BCA5) of Arabidopsis thaliana (Mouse-ear cress).